Here is a 158-residue protein sequence, read N- to C-terminus: Pycsar effector protein SaPycTM (158 aa).

The next 3 helical transmembrane spans lie at 20-40 (FADAKALAIISINGFILNFNF), 53-73 (IFNFTAFILLIITIILAAFAV), and 136-156 (VFIISALGYSCLLFSSIFQII).

The protein resides in the cell membrane. Its function is as follows. Pycsar (pyrimidine cyclase system for antiphage resistance) provides immunity against bacteriophage. The pyrimidine cyclase (PycC) synthesizes cyclic nucleotides in response to infection; these serve as specific second messenger signals. The signals activate the adjacent effector, leading to bacterial cell death and abortive phage infection. A clade E Pycsar system. The effector gene of a two-gene Pycsar system. Expression of this and adjacent SaPycC cytidylate cyclase (AC P0DV38) probably confers resistance to bacteriophage. The genes are probably only expressed in response to bacteriophage infection. Probably only responds to cCMP (produced by its cognate NTP cyclase), acts by impairing membrane integrity. The polypeptide is Pycsar effector protein SaPycTM (Staphylococcus aureus).